Here is a 522-residue protein sequence, read N- to C-terminus: ATP synthase subunit alpha 2 (522 aa).

Residue 176–183 (GDRQTGKT) participates in ATP binding.

The protein belongs to the ATPase alpha/beta chains family. In terms of assembly, F-type ATPases have 2 components, CF(1) - the catalytic core - and CF(0) - the membrane proton channel. CF(1) has five subunits: alpha(3), beta(3), gamma(1), delta(1), epsilon(1). CF(0) has three main subunits: a(1), b(2) and c(9-12). The alpha and beta chains form an alternating ring which encloses part of the gamma chain. CF(1) is attached to CF(0) by a central stalk formed by the gamma and epsilon chains, while a peripheral stalk is formed by the delta and b chains.

Its subcellular location is the cell inner membrane. The enzyme catalyses ATP + H2O + 4 H(+)(in) = ADP + phosphate + 5 H(+)(out). Produces ATP from ADP in the presence of a proton gradient across the membrane. The alpha chain is a regulatory subunit. This is ATP synthase subunit alpha 2 from Syntrophotalea carbinolica (strain DSM 2380 / NBRC 103641 / GraBd1) (Pelobacter carbinolicus).